Consider the following 701-residue polypeptide: MADLSKYRNIGIFAHVDAGKTTTTERILKLTGQIHKTGEVHDGESTTDFMEQEAERGITIQSAAVSCFWNDHRFNVIDTPGHVDFTVEVYRSLKVLDGGVGVFCGSGGVEPQSETNWRYANDSKVARIIMVNKLDRLGADFYRVCKQVKDVLGANPLIMTLPIGTEDEFVGVVDLLSEKAYIWDDTGLPENYEVTDIPADMVEQAAEYRVKLIETALEVDEDMLMEFLEGEMVPTIEQIKACIRTGTRDMTFFPTYGASAFKNKGIQLILDAVVDYLPSPTDVNPQPLTDEEGTPNGEFAIVSADETFKALAFKITDDRFGTLTFVRIYSGTLKKGDTILNAATGKTERVGRMCEMQADDRNELTSAQAGDIIAIVGMKSNVQTGHTLCDPKHPIVLEAMVFPKPVISISVTPKDKGSTEKMGLAIGKMVAEDPTFKVETDIDSGETILSGMGELHLDIKVDILKRTYGVELEVGKPQVAYRETITTAIEDSYTHKKQSGGSGQFGKIDYRIKPGEPGSGFVFSSVVVGGNVPKEFFPAIEKGFKGMMDTGVLAGFPVLDVEIELYDGGFHAVDSSAVAFELAARGAFRQSIPKAGAQLIEPIMKVDVFTPDDHVGDVIGDLNRRRGMIGGQEAGVSGVRIKADVPLSEMFGYIGTLRTMTSGRGQFSMEFSHYMPCPNNVAEIVIAEVKAAKIAKDAARK.

Positions 5 to 281 (SKYRNIGIFA…AVVDYLPSPT (277 aa)) constitute a tr-type G domain. Residues 14-21 (AHVDAGKT), 78-82 (DTPGH), and 132-135 (NKLD) contribute to the GTP site.

The protein belongs to the TRAFAC class translation factor GTPase superfamily. Classic translation factor GTPase family. EF-G/EF-2 subfamily.

The protein localises to the cytoplasm. Its function is as follows. Catalyzes the GTP-dependent ribosomal translocation step during translation elongation. During this step, the ribosome changes from the pre-translocational (PRE) to the post-translocational (POST) state as the newly formed A-site-bound peptidyl-tRNA and P-site-bound deacylated tRNA move to the P and E sites, respectively. Catalyzes the coordinated movement of the two tRNA molecules, the mRNA and conformational changes in the ribosome. This chain is Elongation factor G 1, found in Colwellia psychrerythraea (strain 34H / ATCC BAA-681) (Vibrio psychroerythus).